The chain runs to 239 residues: Geranylgeranylglyceryl phosphate synthase (239 aa).

Residues D19 and S48 each coordinate Mg(2+). Residues Y167–G173, G197–G198, and G219–T220 each bind sn-glycerol 1-phosphate.

It belongs to the GGGP/HepGP synthase family. Group II subfamily. Mg(2+) serves as cofactor.

It is found in the cytoplasm. It carries out the reaction sn-glycerol 1-phosphate + (2E,6E,10E)-geranylgeranyl diphosphate = sn-3-O-(geranylgeranyl)glycerol 1-phosphate + diphosphate. It participates in membrane lipid metabolism; glycerophospholipid metabolism. Functionally, prenyltransferase that catalyzes the transfer of the geranylgeranyl moiety of geranylgeranyl diphosphate (GGPP) to the C3 hydroxyl of sn-glycerol-1-phosphate (G1P). This reaction is the first ether-bond-formation step in the biosynthesis of archaeal membrane lipids. The protein is Geranylgeranylglyceryl phosphate synthase of Methanopyrus kandleri (strain AV19 / DSM 6324 / JCM 9639 / NBRC 100938).